The following is a 689-amino-acid chain: DNA-directed RNA polymerase subunit beta' (689 aa).

The Zn(2+) site is built by Cys-69, Cys-71, Cys-87, and Cys-90. Mg(2+) is bound by residues Asp-489, Asp-491, and Asp-493.

It belongs to the RNA polymerase beta' chain family. RpoC1 subfamily. In terms of assembly, in plastids the minimal PEP RNA polymerase catalytic core is composed of four subunits: alpha, beta, beta', and beta''. When a (nuclear-encoded) sigma factor is associated with the core the holoenzyme is formed, which can initiate transcription. Mg(2+) is required as a cofactor. It depends on Zn(2+) as a cofactor.

The protein localises to the plastid. It localises to the chloroplast. The catalysed reaction is RNA(n) + a ribonucleoside 5'-triphosphate = RNA(n+1) + diphosphate. DNA-dependent RNA polymerase catalyzes the transcription of DNA into RNA using the four ribonucleoside triphosphates as substrates. In Lactuca sativa (Garden lettuce), this protein is DNA-directed RNA polymerase subunit beta'.